A 122-amino-acid polypeptide reads, in one-letter code: Flowering-promoting factor 1-like protein 3 (122 aa).

Residues 16–36 form a disordered region; sequence ENPGSEESSSAGDGGGGGRRK.

Belongs to the FPF1 family.

This Oryza sativa subsp. japonica (Rice) protein is Flowering-promoting factor 1-like protein 3.